A 103-amino-acid polypeptide reads, in one-letter code: Small ribosomal subunit protein bS6c (103 aa).

Belongs to the bacterial ribosomal protein bS6 family.

Its subcellular location is the plastid. The protein resides in the chloroplast. In terms of biological role, binds together with bS18 to 16S ribosomal RNA. The polypeptide is Small ribosomal subunit protein bS6c (Thalassiosira pseudonana (Marine diatom)).